Reading from the N-terminus, the 266-residue chain is Hemin import ATP-binding protein HmuV (266 aa).

In terms of domain architecture, ABC transporter spans 2–242; that stretch reads IEAVDICVQR…QNLRDVYSCS (241 aa). Position 34–41 (34–41) interacts with ATP; that stretch reads GPNGSGKS.

Belongs to the ABC transporter superfamily. Heme (hemin) importer (TC 3.A.1.14.5) family. In terms of assembly, the complex is composed of two ATP-binding proteins (HmuV), two transmembrane proteins (HmuU) and a solute-binding protein (HmuT).

It is found in the cell inner membrane. Functionally, part of the ABC transporter complex HmuTUV involved in hemin import. Responsible for energy coupling to the transport system. In Bartonella henselae (strain ATCC 49882 / DSM 28221 / CCUG 30454 / Houston 1) (Rochalimaea henselae), this protein is Hemin import ATP-binding protein HmuV.